Consider the following 517-residue polypeptide: Maturase K (517 aa).

This sequence belongs to the intron maturase 2 family. MatK subfamily.

It localises to the plastid. Its subcellular location is the chloroplast. Its function is as follows. Usually encoded in the trnK tRNA gene intron. Probably assists in splicing its own and other chloroplast group II introns. The sequence is that of Maturase K from Dracula chimaera.